The following is a 495-amino-acid chain: Phytochrome A type 5 (495 aa).

Residues 1 to 21 show a composition bias toward low complexity; that stretch reads MSSSRPASSSSSRNRQSSQAR. Residues 1–24 form a disordered region; sequence MSSSRPASSSSSRNRQSSQARVLA. A GAF domain is found at 217–402; the sequence is SMEMLCNTVV…VFAVHVNREF (186 aa). Position 322 (Cys-322) interacts with phytochromobilin.

It belongs to the phytochrome family. Homodimer. In terms of processing, contains one covalently linked phytochromobilin chromophore.

In terms of biological role, regulatory photoreceptor which exists in two forms that are reversibly interconvertible by light: the Pr form that absorbs maximally in the red region of the spectrum and the Pfr form that absorbs maximally in the far-red region. Photoconversion of Pr to Pfr induces an array of morphogenic responses, whereas reconversion of Pfr to Pr cancels the induction of those responses. Pfr controls the expression of a number of nuclear genes including those encoding the small subunit of ribulose-bisphosphate carboxylase, chlorophyll A/B binding protein, protochlorophyllide reductase, rRNA, etc. It also controls the expression of its own gene(s) in a negative feedback fashion. The protein is Phytochrome A type 5 (PHYA5) of Avena sativa (Oat).